A 948-amino-acid polypeptide reads, in one-letter code: Valine--tRNA ligase (948 aa).

Positions 40 to 50 (PNVTGSLHMGH) match the 'HIGH' region motif. The short motif at 551–555 (KMSKS) is the 'KMSKS' region element. Lys-554 contacts ATP. Positions 879–947 (LIDKGAELAR…LAEQHARISS (69 aa)) form a coiled coil.

The protein belongs to the class-I aminoacyl-tRNA synthetase family. ValS type 1 subfamily. In terms of assembly, monomer.

The protein resides in the cytoplasm. It catalyses the reaction tRNA(Val) + L-valine + ATP = L-valyl-tRNA(Val) + AMP + diphosphate. Its function is as follows. Catalyzes the attachment of valine to tRNA(Val). As ValRS can inadvertently accommodate and process structurally similar amino acids such as threonine, to avoid such errors, it has a 'posttransfer' editing activity that hydrolyzes mischarged Thr-tRNA(Val) in a tRNA-dependent manner. The sequence is that of Valine--tRNA ligase from Pseudomonas fluorescens (strain ATCC BAA-477 / NRRL B-23932 / Pf-5).